The following is a 265-amino-acid chain: Phosphatidylglycerol--prolipoprotein diacylglyceryl transferase (265 aa).

Transmembrane regions (helical) follow at residues 17 to 37 (LAIR…IWLA), 59 to 79 (MLFY…VLFY), 94 to 114 (VWKG…AMSI), 123 to 143 (VLDV…FGRL), 177 to 197 (SPLY…WLFA), 204 to 224 (MAVG…TEYF), and 238 to 258 (ISAG…MLLI). Arg142 serves as a coordination point for a 1,2-diacyl-sn-glycero-3-phospho-(1'-sn-glycerol).

This sequence belongs to the Lgt family.

Its subcellular location is the cell inner membrane. It catalyses the reaction L-cysteinyl-[prolipoprotein] + a 1,2-diacyl-sn-glycero-3-phospho-(1'-sn-glycerol) = an S-1,2-diacyl-sn-glyceryl-L-cysteinyl-[prolipoprotein] + sn-glycerol 1-phosphate + H(+). It functions in the pathway protein modification; lipoprotein biosynthesis (diacylglyceryl transfer). Catalyzes the transfer of the diacylglyceryl group from phosphatidylglycerol to the sulfhydryl group of the N-terminal cysteine of a prolipoprotein, the first step in the formation of mature lipoproteins. This chain is Phosphatidylglycerol--prolipoprotein diacylglyceryl transferase, found in Janthinobacterium sp. (strain Marseille) (Minibacterium massiliensis).